The primary structure comprises 345 residues: NADH-quinone oxidoreductase subunit H (345 aa).

Transmembrane regions (helical) follow at residues 14 to 34 (IILA…LFLV), 84 to 104 (FILA…VIPF), 115 to 135 (VAIL…IMGG), 161 to 181 (IGLI…GDIV), 187 to 207 (GWGF…LFFI), 248 to 268 (YIAI…GWLS), 277 to 297 (VLWM…VKAI), and 309 to 329 (LGWK…AFAA).

This sequence belongs to the complex I subunit 1 family. NDH-1 is composed of 14 different subunits. Subunits NuoA, H, J, K, L, M, N constitute the membrane sector of the complex.

The protein resides in the cell inner membrane. It carries out the reaction a quinone + NADH + 5 H(+)(in) = a quinol + NAD(+) + 4 H(+)(out). Functionally, NDH-1 shuttles electrons from NADH, via FMN and iron-sulfur (Fe-S) centers, to quinones in the respiratory chain. The immediate electron acceptor for the enzyme in this species is believed to be ubiquinone. Couples the redox reaction to proton translocation (for every two electrons transferred, four hydrogen ions are translocated across the cytoplasmic membrane), and thus conserves the redox energy in a proton gradient. This subunit may bind ubiquinone. This is NADH-quinone oxidoreductase subunit H from Ruegeria pomeroyi (strain ATCC 700808 / DSM 15171 / DSS-3) (Silicibacter pomeroyi).